The primary structure comprises 227 residues: Ornithine decarboxylase antizyme 1 (227 aa).

The protein belongs to the ODC antizyme family. Interacts with ODC1 and thereby sterically blocks ODC homodimerization. Forms a ternary complex with PSMB4 and OAZ1 before PSMB4 is incorporated into the 20S proteasome. Interacts with AZIN2; this interaction disrupts the interaction between the antizyme and ODC1. Interacts with FAM171A1.

Functionally, ornithine decarboxylase (ODC) antizyme protein that negatively regulates ODC activity and intracellular polyamine biosynthesis and uptake in response to increased intracellular polyamine levels. Binds to ODC monomers, inhibiting the assembly of the functional ODC homodimer, and targets the monomers for ubiquitin-independent proteolytic destruction by the 26S proteasome. Triggers ODC degradation by inducing the exposure of a cryptic proteasome-interacting surface of ODC. Stabilizes AZIN2 by interfering with its ubiquitination. Also inhibits cellular uptake of polyamines by inactivating the polyamine uptake transporter. SMAD1/OAZ1/PSMB4 complex mediates the degradation of the CREBBP/EP300 repressor SNIP1. Involved in the translocation of AZIN2 from ER-Golgi intermediate compartment (ERGIC) to the cytosol. This is Ornithine decarboxylase antizyme 1 (Oaz1) from Rattus norvegicus (Rat).